Consider the following 140-residue polypeptide: Nucleoside diphosphate kinase (140 aa).

Residues Lys10, Phe58, Arg86, Thr92, Arg103, and Asn113 each coordinate ATP. His116 acts as the Pros-phosphohistidine intermediate in catalysis.

This sequence belongs to the NDK family. In terms of assembly, homotetramer. Requires Mg(2+) as cofactor.

The protein localises to the cytoplasm. The enzyme catalyses a 2'-deoxyribonucleoside 5'-diphosphate + ATP = a 2'-deoxyribonucleoside 5'-triphosphate + ADP. It catalyses the reaction a ribonucleoside 5'-diphosphate + ATP = a ribonucleoside 5'-triphosphate + ADP. In terms of biological role, major role in the synthesis of nucleoside triphosphates other than ATP. The ATP gamma phosphate is transferred to the NDP beta phosphate via a ping-pong mechanism, using a phosphorylated active-site intermediate. The polypeptide is Nucleoside diphosphate kinase (Haemophilus influenzae (strain PittEE)).